The chain runs to 524 residues: Leucine-rich repeat-containing protein 1 (524 aa).

17 LRR repeats span residues 11 to 34 (NRHV…IYRY), 35 to 58 (ARSL…FFQL), 60 to 81 (KLRK…IANF), 83 to 105 (QLVE…AFCK), 107 to 126 (LQVA…SFPE), 127 to 149 (LQNL…NIGN), 150 to 172 (LYNL…SLTQ), 173 to 196 (LRRL…IGAL), 198 to 218 (HLKD…EIGN), 219 to 242 (LKNL…ISGL), 244 to 264 (SLTY…GIGK), 265 to 288 (LKKL…IGDC), 290 to 310 (NLTE…SIGK), 311 to 334 (LKKL…IGGC), 336 to 356 (SLTM…EVSQ), 357 to 380 (AVEL…LTTL), and 382 to 405 (LKAL…IDRA). Positions 456-512 (SAIRFLEDEKDEDENETRTLQRRATPHPGELKNMKKTVENLRNDMNAAKGLDSNKNE) form a coiled coil. Residues 464 to 485 (EKDEDENETRTLQRRATPHPGE) form a disordered region. Threonine 480 is modified (phosphothreonine).

As to quaternary structure, interacts with DLG1. May form a complex with DLG1 and ERBIN, where interaction between LRRC1 and ERBIN is indirect.

The protein localises to the cytoplasm. The protein resides in the membrane. The protein is Leucine-rich repeat-containing protein 1 (Lrrc1) of Mus musculus (Mouse).